We begin with the raw amino-acid sequence, 1530 residues long: B-cell CLL/lymphoma 9-like protein (1530 aa).

Disordered regions lie at residues 1–101, 155–187, 246–353, 398–439, 473–503, 821–1076, 1250–1279, and 1310–1331; these read MHSE…VLEP, QGHSGSSTTGHVSDPGGPGLGSGHGPGIRTDLH, HISS…PSVL, SGTG…IGGG, QTQNLGGPGLDDSLMGPHHGMPPHSHHLSSP, QNGR…QNPL, KGMSHQRPPHQPDSFPPMPMGDGPDLSEVI, and SETMSQPQQNPHQGQPPPQVSS. The span at 8–18 shows a compositional bias: polar residues; the sequence is SNHGKQVTSGA. Residues 19 to 34 show a composition bias toward low complexity; sequence QSQLPNVNQAQQQAPA. The segment covering 81 to 93 has biased composition (basic and acidic residues); sequence ERSVSIDTGDQRE. Residues 156–165 are compositionally biased toward low complexity; it reads GHSGSSTTGH. The segment covering 170 to 180 has biased composition (gly residues); that stretch reads GGPGLGSGHGP. Composition is skewed to polar residues over residues 247 to 264 and 278 to 287; these read ISSSHSPPIGTPKSQSGT and GTSTPSSTGH. Composition is skewed to low complexity over residues 409 to 426 and 485 to 503; these read GPNGNPNGTNVNNNNSND and SLMGPHHGMPPHSHHLSSP. Polar residues-rich tracts occupy residues 875-891, 920-930, and 944-953; these read LSSTSRLSHIPMNTGSR, QLKSPSLSQEP, and SPSQLPQSGP. 3 stretches are compositionally biased toward low complexity: residues 960–971, 979–994, and 1031–1060; these read AASGAGTPSSTS, GPSLGLRSPSGSPGHL, and SSSTDTGMSLPPRSSNSTPISQPSNSINPS. The span at 1258 to 1268 shows a compositional bias: pro residues; sequence PHQPDSFPPMP.

It belongs to the BCL9 family.

It is found in the nucleus. In terms of biological role, transcriptional regulator that may act as an activator. Plays a role for mesoderm patterning in early embryogenesis. The chain is B-cell CLL/lymphoma 9-like protein (bcl9l) from Danio rerio (Zebrafish).